The following is a 664-amino-acid chain: DNA ligase (664 aa).

NAD(+)-binding positions include Asp32 to Asp36, Ser81 to Leu82, and Glu113. Lys115 (N6-AMP-lysine intermediate) is an active-site residue. NAD(+) contacts are provided by Arg136, Glu173, Lys289, and Lys313. 4 residues coordinate Zn(2+): Cys407, Cys410, Cys425, and Cys431. One can recognise a BRCT domain in the interval Ala586–Ser664.

This sequence belongs to the NAD-dependent DNA ligase family. LigA subfamily. Mg(2+) is required as a cofactor. It depends on Mn(2+) as a cofactor.

It catalyses the reaction NAD(+) + (deoxyribonucleotide)n-3'-hydroxyl + 5'-phospho-(deoxyribonucleotide)m = (deoxyribonucleotide)n+m + AMP + beta-nicotinamide D-nucleotide.. Functionally, DNA ligase that catalyzes the formation of phosphodiester linkages between 5'-phosphoryl and 3'-hydroxyl groups in double-stranded DNA using NAD as a coenzyme and as the energy source for the reaction. It is essential for DNA replication and repair of damaged DNA. The polypeptide is DNA ligase (Aeromonas salmonicida (strain A449)).